The following is an 886-amino-acid chain: Putative leucine-rich repeat receptor-like serine/threonine-protein kinase At2g14440 (886 aa).

An N-terminal signal peptide occupies residues 1–23 (METRSKLMLLACATFSIISLVKS). At 24–528 (QNQQGFISLY…KHQPKSWLVA (505 aa)) the chain is on the extracellular side. Asn49, Asn69, Asn232, Asn236, Asn259, Asn292, Asn434, Asn447, Asn458, and Asn471 each carry an N-linked (GlcNAc...) asparagine glycan. LRR repeat units follow at residues 413-436 (RIISLDLSSSGLTGVITPSIQNLT), 437-460 (MLRELDLSNNNLTGVIPPSLQNLT), 461-483 (MLRELDLSNNNLTGEVPEFLATI), and 485-507 (PLLVIHLRGNNLRGSVPQALQDR). A helical transmembrane segment spans residues 529 to 549 (IVASISCVAVTIIVLVLIFIF). The Cytoplasmic portion of the chain corresponds to 550–886 (RRRKSSTRKV…TFISDIPSAR (337 aa)). Residues 581-850 (NNFEVVLGKG…NMTRVAHELN (270 aa)) form the Protein kinase domain. ATP is bound by residues 587 to 595 (LGKGGFGVV) and Lys608. Tyr653 is subject to Phosphotyrosine. Asp705 serves as the catalytic Proton acceptor. A Phosphoserine modification is found at Ser739. A phosphothreonine mark is found at Thr740 and Thr745. The residue at position 753 (Tyr753) is a Phosphotyrosine. The interval 863 to 886 (SQDQNSSKSSGHTVTFISDIPSAR) is disordered. Residues 865–878 (DQNSSKSSGHTVTF) show a composition bias toward polar residues.

The protein belongs to the protein kinase superfamily. Ser/Thr protein kinase family.

The protein localises to the cell membrane. The enzyme catalyses L-seryl-[protein] + ATP = O-phospho-L-seryl-[protein] + ADP + H(+). It catalyses the reaction L-threonyl-[protein] + ATP = O-phospho-L-threonyl-[protein] + ADP + H(+). The chain is Putative leucine-rich repeat receptor-like serine/threonine-protein kinase At2g14440 from Arabidopsis thaliana (Mouse-ear cress).